The primary structure comprises 204 residues: Putative AgrB-like protein (204 aa).

A run of 4 helical transmembrane segments spans residues 52-74, 87-107, 111-131, and 156-176; these read YGIALVTGLLLQTVTVHLSYLWL, LNCTLISLMMFVLAPFVFQNI, NWIVLGTFGFILLNMFLFAPA, and LILTGIALLIPFAEMKTLIMV.

The protein belongs to the AgrB family.

It localises to the cell membrane. Its function is as follows. May be involved in the proteolytic processing of a quorum sensing system signal molecule precursor. The protein is Putative AgrB-like protein of Listeria monocytogenes serotype 4b (strain CLIP80459).